The sequence spans 215 residues: Sodium channel regulatory subunit beta-3 (215 aa).

The signal sequence occupies residues 1–24 (MPAFNRLLPLASLVLIYWVRVCFP). One can recognise an Ig-like C2-type domain in the interval 25–138 (VCVEVPSETE…EAHRPFVKTT (114 aa)). At 25-156 (VCVEVPSETE…EEAGEDFTSV (132 aa)) the chain is on the extracellular side. 2 disulfide bridges follow: Cys-26–Cys-48 and Cys-45–Cys-120. Asn-95, Asn-109, Asn-113, and Asn-121 each carry an N-linked (GlcNAc...) asparagine glycan. The helical transmembrane segment at 157 to 178 (VSEIMMYILLVFLTLWLFIEMI) threads the bilayer. The Cytoplasmic segment spans residues 179–215 (YCYRKVSKAEEAAQENASDYLAIPSENKENSVVPVEE).

The protein belongs to the sodium channel auxiliary subunit SCN3B (TC 8.A.17) family. As to quaternary structure, a voltage-gated sodium (Nav) channel consists of an ion-conducting pore-forming alpha subunit functional on its own that is regulated by one or more beta subunits. Forms homodimers and homotrimers. SCN3B is non-covalently associated with alpha subunits and induces the formation of alpha subunit oligomers, including trimers. Interacts with SCN5A/Nav1.5; regulatory subunit of SCN5A/Nav1.5. Interacts with SCN7A/Nav2.1; probable regulatory subunit of SCN7A/Nav2.1. Interacts with SCN10A; regulatory subunit of SCN10A/Nav1.8. Interacts with NFASC; probably involved in targeting the sodium channels to the nodes of Ranvier. Post-translationally, intramolecular disulfide bonds favor the voltage-gated sodium channel oligomeric complex assembly. In terms of processing, N-glycosylated. In terms of tissue distribution, expressed broadly in neurons in the central and peripheral nervous systems, but not in glia and most non-neuronal cells. Weak detection in lung and adrenal gland.

It is found in the cell membrane. Its function is as follows. Regulatory subunit of multiple voltage-gated sodium (Nav) channels directly mediating the depolarization of excitable membranes. Navs, also called VGSCs (voltage-gated sodium channels) or VDSCs (voltage-dependent sodium channels), operate by switching between closed and open conformations depending on the voltage difference across the membrane. In the open conformation they allow Na(+) ions to selectively pass through the pore, along their electrochemical gradient. The influx of Na+ ions provokes membrane depolarization, initiating the propagation of electrical signals throughout cells and tissues. The accessory beta subunits participate in localization and functional modulation of the Nav channels. Voltage-gated sodium channels regulatory subunit that modulates channel gating kinetics. Modulates the activity of SCN2A/Nav1.2, causing a hyperpolarizing shift in the voltage-dependence of inactivation and increasing the fraction of channels operating in the fast gating mode. Also able to induce unique persistent SCN2A/Nav1.2-mediated sodium currents. Could modulate the activity of SCN10A/Nav1.8. This chain is Sodium channel regulatory subunit beta-3, found in Rattus norvegicus (Rat).